The sequence spans 316 residues: Secreted effector protein SifB (316 aa).

It belongs to the Sif family.

Its subcellular location is the secreted. It is found in the host cytoplasm. Functionally, effector proteins function to alter host cell physiology and promote bacterial survival in host tissues. The sequence is that of Secreted effector protein SifB (sifB) from Salmonella typhimurium (strain LT2 / SGSC1412 / ATCC 700720).